Reading from the N-terminus, the 21-residue chain is GIWDTIKSMGKVFAGKILQNL.

A Leucine amide modification is found at L21.

Expressed by the skin glands.

It is found in the secreted. In terms of biological role, antimicrobial peptide with activity against Gram-negative and Gram-positive bacteria (MIC=13 uM against E.coli, MIC=25 uM against S.aureus) and fungi (MIC=25 uM against C.albicans). Also shows hemolytic activity (HC(50)=50 uM). In vitro, shows moderate inhibitory activity against HIV. This Lithobates septentrionalis (Mink frog) protein is Brevinin-2-related peptide.